A 452-amino-acid polypeptide reads, in one-letter code: Tripartite motif-containing protein 51 (452 aa).

Residues 15 to 56 (CPICMNYFLDPVTIDCGHSFCRPCLYLNWQDTAVLAQCSECK) form an RING-type zinc finger. A B box-type zinc finger spans residues 88 to 129 (SEEQICGMHRETKKMFCEVDKSLLCLPCSNSQEHRNHIHCPI). Residues Cys93, His96, Cys115, and His121 each contribute to the Zn(2+) site. One can recognise a B30.2/SPRY domain in the interval 269–452 (ELSAGPITGL…LRPIFCCSHF (184 aa)).

It belongs to the TRIM/RBCC family.

This Homo sapiens (Human) protein is Tripartite motif-containing protein 51 (TRIM51).